Here is a 621-residue protein sequence, read N- to C-terminus: Probable potassium transport system protein Kup 2 (621 aa).

12 consecutive transmembrane segments (helical) span residues 9–29, 48–68, 101–121, 136–156, 164–184, 210–230, 246–266, 275–295, 336–356, 364–384, 393–413, and 418–438; these read MAGLTLAALGVVYGDIGTSPL, IFGILSLIFWSLIFVVSVKYV, IVLLGLFGAALFYGDAIITPA, SGMEAYVLPMAVGVLVGLFLL, VGLMFGPVMMVWFAILGILGL, GFHAFLTLGSVVLALTGAEAL, WFSLVLPGLGLNYFGQGALLM, PFFLLAPDWALLPMIALATLA, IYMPFINWALLVAVLVVVLTF, AAYGIAVTGTMLITTMLFFVV, LPLALGITLLFGVIDTAFFAA, and VADGGWLPLVMGMAIFTLMST.

This sequence belongs to the HAK/KUP transporter (TC 2.A.72) family.

The protein localises to the cell inner membrane. The catalysed reaction is K(+)(in) + H(+)(in) = K(+)(out) + H(+)(out). Its function is as follows. Transport of potassium into the cell. Likely operates as a K(+):H(+) symporter. This chain is Probable potassium transport system protein Kup 2, found in Chromobacterium violaceum (strain ATCC 12472 / DSM 30191 / JCM 1249 / CCUG 213 / NBRC 12614 / NCIMB 9131 / NCTC 9757 / MK).